Consider the following 377-residue polypeptide: Prostaglandin E synthase 2 (377 aa).

The Lumenal segment spans residues 1–57; the sequence is MDPAARVVRALWPGGCALAWRLGGRPQPLLPTQSRAGFAGAAGGPSPVAAARKGSPR. Residues 58–74 form a helical membrane-spanning segment; that stretch reads LLGAAALALGGALGLYH. The Cytoplasmic segment spans residues 75 to 377; it reads TARWHLRAQD…RAITEASPAH (303 aa). The 104-residue stretch at 90-193 folds into the Glutaredoxin domain; it reads SAAQLSLSSR…EIITYYPAMK (104 aa). A Phosphoserine modification is found at serine 95. Glutathione contacts are provided by residues valine 148 and 164-165; that span reads DS. Residues 263 to 377 form the GST C-terminal domain; the sequence is YIVREGKFGA…RAITEASPAH (115 aa).

Belongs to the GST superfamily. Homodimer. May interact with CEBPB. Interacts with EXOSC10. In terms of processing, synthesized as a Golgi membrane-associated protein, and the proteolytic removal of the N-terminal hydrophobic domain leads to the formation of a mature cytosolic enzyme. As to expression, widely expressed. Expressed in the heart, including apex, inter-ventricular septum, both atria and ventricles, but not in the aorta. Also expressed in fetal heart. Detected in various regions of the brain: cerebellum; occipital, frontal and parietal lobes. Also expressed in the lymph nodes, skeletal muscle, kidney and trachea, but not in the thymus or lung. Overexpressed in colorectal cancer.

Its subcellular location is the golgi apparatus membrane. It localises to the cytoplasm. The protein localises to the perinuclear region. It carries out the reaction prostaglandin H2 = prostaglandin E2. It catalyses the reaction prostaglandin H2 = (12S)-hydroxy-(5Z,8E,10E)-heptadecatrienoate + malonaldehyde. It functions in the pathway lipid metabolism; prostaglandin biosynthesis. Its activity is regulated as follows. Isomerase activity is increased by sulfhydril compounds. Dithiothreitol (DTT) is most effective, followed by dihydrolipoic acid, glutathione (GSH) and 2-mercaptoethanol. Its function is as follows. Isomerase that catalyzes the conversion of PGH2 into the more stable prostaglandin E2 (PGE2) (in vitro). The biological function and the GSH-dependent property of PTGES2 is still under debate. In vivo, PTGES2 could form a complex with GSH and heme and would not participate in PGE2 synthesis but would catalyze the degradation of prostaglandin E2 H2 (PGH2) to 12(S)-hydroxy-5(Z),8(E),10(E)-heptadecatrienoic acid (HHT) and malondialdehyde (MDA). This Homo sapiens (Human) protein is Prostaglandin E synthase 2 (PTGES2).